The chain runs to 51 residues: Large ribosomal subunit protein bL33 (51 aa).

This sequence belongs to the bacterial ribosomal protein bL33 family.

This is Large ribosomal subunit protein bL33 from Colwellia psychrerythraea (strain 34H / ATCC BAA-681) (Vibrio psychroerythus).